Here is a 351-residue protein sequence, read N- to C-terminus: Putative [LysW]-L-2-aminoadipate/[LysW]-L-glutamate phosphate reductase (351 aa).

NADP(+) contacts are provided by residues 9 to 12 (SGFV) and 33 to 35 (SRR). Residue Cys150 is part of the active site. Asn318 is an NADP(+) binding site.

This sequence belongs to the NAGSA dehydrogenase family. Type 1 subfamily. LysY sub-subfamily.

It is found in the cytoplasm. It carries out the reaction [amino-group carrier protein]-C-terminal-N-(1-carboxy-5-oxopentan-1-yl)-L-glutamine + phosphate + NADP(+) = [amino-group carrier protein]-C-terminal-N-(1-carboxy-5-phosphooxy-5-oxopentan-1-yl)-L-glutamine + NADPH + H(+). It catalyses the reaction [amino-group carrier protein]-C-terminal-gamma-(L-glutamyl-5-semialdehyde)-L-glutamate + phosphate + NADP(+) = [amino-group carrier protein]-C-terminal-gamma-(5-phospho-L-glutamyl)-L-glutamate + NADPH + H(+). Its pathway is amino-acid biosynthesis; L-lysine biosynthesis via AAA pathway; L-lysine from L-alpha-aminoadipate (Thermus route): step 3/5. It functions in the pathway amino-acid biosynthesis; L-arginine biosynthesis. Functionally, involved in both the arginine and lysine biosynthetic pathways. This is Putative [LysW]-L-2-aminoadipate/[LysW]-L-glutamate phosphate reductase from Pyrobaculum aerophilum (strain ATCC 51768 / DSM 7523 / JCM 9630 / CIP 104966 / NBRC 100827 / IM2).